The following is a 526-amino-acid chain: Ferrochelatase-2, chloroplastic (526 aa).

This sequence belongs to the ferrochelatase family.

The protein resides in the plastid. Its subcellular location is the chloroplast. The catalysed reaction is heme b + 2 H(+) = protoporphyrin IX + Fe(2+). It participates in porphyrin-containing compound metabolism; protoheme biosynthesis; protoheme from protoporphyrin-IX: step 1/1. Catalyzes the ferrous insertion into protoporphyrin IX. The polypeptide is Ferrochelatase-2, chloroplastic (Oryza sativa subsp. japonica (Rice)).